Here is a 399-residue protein sequence, read N- to C-terminus: Probable F-box protein At4g22060 (399 aa).

The F-box domain maps to Ser-12–Arg-48.

This Arabidopsis thaliana (Mouse-ear cress) protein is Probable F-box protein At4g22060.